A 421-amino-acid chain; its full sequence is 3-isopropylmalate dehydratase large subunit (421 aa).

3 residues coordinate [4Fe-4S] cluster: Cys302, Cys362, and Cys365.

It belongs to the aconitase/IPM isomerase family. LeuC type 2 subfamily. Heterodimer of LeuC and LeuD. It depends on [4Fe-4S] cluster as a cofactor.

It catalyses the reaction (2R,3S)-3-isopropylmalate = (2S)-2-isopropylmalate. The protein operates within amino-acid biosynthesis; L-leucine biosynthesis; L-leucine from 3-methyl-2-oxobutanoate: step 2/4. Its function is as follows. Catalyzes the isomerization between 2-isopropylmalate and 3-isopropylmalate, via the formation of 2-isopropylmaleate. This chain is 3-isopropylmalate dehydratase large subunit, found in Campylobacter fetus subsp. fetus (strain 82-40).